The sequence spans 380 residues: Cytochrome b (380 aa).

Helical transmembrane passes span 33–53, 77–98, 113–133, and 178–198; these read FGSL…FLAM, WMIR…FLHI, WNIG…GYVL, and FFTL…LHLL. Heme b is bound by residues His-83 and His-97. Heme b-binding residues include His-182 and His-196. Position 201 (His-201) interacts with a ubiquinone. 4 consecutive transmembrane segments (helical) span residues 226 to 246, 288 to 308, 320 to 340, and 347 to 367; these read IKDI…TLLS, LGGV…PALH, LSQF…WIGG, and FITI…LLMP.

The protein belongs to the cytochrome b family. In terms of assembly, the cytochrome bc1 complex contains 11 subunits: 3 respiratory subunits (MT-CYB, CYC1 and UQCRFS1), 2 core proteins (UQCRC1 and UQCRC2) and 6 low-molecular weight proteins (UQCRH/QCR6, UQCRB/QCR7, UQCRQ/QCR8, UQCR10/QCR9, UQCR11/QCR10 and a cleavage product of UQCRFS1). This cytochrome bc1 complex then forms a dimer. Heme b is required as a cofactor.

The protein resides in the mitochondrion inner membrane. Functionally, component of the ubiquinol-cytochrome c reductase complex (complex III or cytochrome b-c1 complex) that is part of the mitochondrial respiratory chain. The b-c1 complex mediates electron transfer from ubiquinol to cytochrome c. Contributes to the generation of a proton gradient across the mitochondrial membrane that is then used for ATP synthesis. In Pongo abelii (Sumatran orangutan), this protein is Cytochrome b (MT-CYB).